Consider the following 865-residue polypeptide: DNA topoisomerase 3-beta (865 aa).

The Toprim domain occupies 6-151; that stretch reads RVLMVAEKPS…KVYRARFSSV (146 aa). Positions 12, 116, and 118 each coordinate Mg(2+). The 421-residue stretch at 167–587 folds into the Topo IA-type catalytic domain; the sequence is NRDEALAVDA…HVIQQFRRKF (421 aa). Residues 209–214 form an interaction with DNA region; it reads SYGPCQ. Tyr-331 functions as the O-(5'-phospho-DNA)-tyrosine intermediate in the catalytic mechanism. Basic residues predominate over residues 833–853; that stretch reads RRGGRGRGRGRGRGRGGRRGS. Positions 833 to 865 are disordered; the sequence is RRGGRGRGRGRGRGRGGRRGSKSVDPKMSFRDF. Positions 854–865 are enriched in basic and acidic residues; it reads KSVDPKMSFRDF.

This sequence belongs to the type IA topoisomerase family. Requires Mg(2+) as cofactor.

It catalyses the reaction ATP-independent breakage of single-stranded DNA, followed by passage and rejoining.. In terms of biological role, releases the supercoiling and torsional tension of DNA introduced during the DNA replication and transcription by transiently cleaving and rejoining one strand of the DNA duplex. Introduces a single-strand break via transesterification at a target site in duplex DNA. The scissile phosphodiester is attacked by the catalytic tyrosine of the enzyme, resulting in the formation of a DNA-(5'-phosphotyrosyl)-enzyme intermediate and the expulsion of a 3'-OH DNA strand. The free DNA strand than undergoes passage around the unbroken strand thus removing DNA supercoils. Finally, in the religation step, the DNA 3'-OH attacks the covalent intermediate to expel the active-site tyrosine and restore the DNA phosphodiester backbone. This Arabidopsis thaliana (Mouse-ear cress) protein is DNA topoisomerase 3-beta.